Consider the following 232-residue polypeptide: MSKMRNLVEEKFLEFYESWVIQLELYLHQLLIAHNNNTMSETELRHLISKLTTHHKAYYTAKWAAIREDVLAFFGSVWLNPLENACSWLTGWKPSMVFRMVDRLRKSRVVLVEAQVKKLEELRVKTKFDEQKIEREMERYQVAMADRKMVELARLGCHVGGESVMVVEAAVRGLSMGLEKMVKAADCVRLKTLKGILDILTPPQCVEFLAAAATFQVQLRRWGNRRHYVTHS.

The DOG1 domain occupies 9-229 (EEKFLEFYES…RRWGNRRHYV (221 aa)).

This Arabidopsis thaliana (Mouse-ear cress) protein is Protein DOG1-like 4.